The chain runs to 117 residues: Prefoldin subunit beta (117 aa).

The protein belongs to the prefoldin subunit beta family. As to quaternary structure, heterohexamer of two alpha and four beta subunits.

The protein resides in the cytoplasm. Its function is as follows. Molecular chaperone capable of stabilizing a range of proteins. Seems to fulfill an ATP-independent, HSP70-like function in archaeal de novo protein folding. This Thermococcus kodakarensis (strain ATCC BAA-918 / JCM 12380 / KOD1) (Pyrococcus kodakaraensis (strain KOD1)) protein is Prefoldin subunit beta.